A 273-amino-acid chain; its full sequence is 3-methyl-2-oxobutanoate hydroxymethyltransferase (273 aa).

Mg(2+)-binding residues include Asp53 and Asp92. 3-methyl-2-oxobutanoate is bound by residues 53–54 (DS), Asp92, and Lys122. Position 124 (Glu124) interacts with Mg(2+). Catalysis depends on Glu191, which acts as the Proton acceptor.

Belongs to the PanB family. As to quaternary structure, homodecamer; pentamer of dimers. The cofactor is Mg(2+).

The protein resides in the cytoplasm. It catalyses the reaction 3-methyl-2-oxobutanoate + (6R)-5,10-methylene-5,6,7,8-tetrahydrofolate + H2O = 2-dehydropantoate + (6S)-5,6,7,8-tetrahydrofolate. The protein operates within cofactor biosynthesis; (R)-pantothenate biosynthesis; (R)-pantoate from 3-methyl-2-oxobutanoate: step 1/2. In terms of biological role, catalyzes the reversible reaction in which hydroxymethyl group from 5,10-methylenetetrahydrofolate is transferred onto alpha-ketoisovalerate to form ketopantoate. This is 3-methyl-2-oxobutanoate hydroxymethyltransferase from Parabacteroides distasonis (strain ATCC 8503 / DSM 20701 / CIP 104284 / JCM 5825 / NCTC 11152).